A 651-amino-acid chain; its full sequence is MBT domain-containing protein 1 (651 aa).

The interval 21-55 (SFGMFDGYDSCSEDTSSSSSSDESEEEVAPLPSSL) is disordered. A compositionally biased stretch (low complexity) spans 29 to 41 (DSCSEDTSSSSSS). The FCS-type zinc finger occupies 68-103 (PDGKSGMATCEMCGMVGVRDAFYSKTKRFCSVSCSR). Cys77, Cys80, Cys97, and Cys101 together coordinate Zn(2+). MBT repeat units lie at residues 164–268 (FSWG…LVPP), 276–373 (TNWK…IGHR), 374–479 (FKRT…LTPP), and 487–583 (FKWF…LQPP). 2 disordered regions span residues 581 to 610 (QPPA…YKGH) and 629 to 651 (TFLQ…KQEP). Low complexity predominate over residues 586–596 (QSNKDSQSNIS). The span at 597 to 610 (KQKKKSKSQPYKGH) shows a compositional bias: basic residues. Residues 632-643 (QGASDQESNGSG) are compositionally biased toward polar residues.

In terms of assembly, monomer. Component of the NuA4 histone acetyltransferase complex.

Its subcellular location is the nucleus. It localises to the chromosome. In terms of biological role, chromatin reader component of the NuA4 histone acetyltransferase complex, a multiprotein complex involved in transcriptional activation of select genes principally by acetylation of nucleosomal histones H4 and H2A. The NuA4 complex plays a direct role in repair of DNA double-strand breaks (DSBs) by promoting homologous recombination (HR). MBTD1 specifically recognizes and binds monomethylated and dimethylated 'Lys-20' on histone H4 (H4K20me1 and H4K20me2, respectively). In the NuA4 complex, MBTD1 promotes recruitment of the complex to H4K20me marks by competing with TP53BP1 for binding to H4K20me. Following recruitment to H4K20me at DNA breaks, the NuA4 complex catalyzes acetylation of 'Lys-15' on histone H2A (H2AK15), blocking the ubiquitination mark required for TP53BP1 localization at DNA breaks, thereby promoting homologous recombination (HR). The sequence is that of MBT domain-containing protein 1 from Xenopus tropicalis (Western clawed frog).